The sequence spans 346 residues: Iron uptake protein A2 (346 aa).

Residues 1 to 31 (MTTKISRRTFFVGGTALTALVVANLPRRASA) constitute a signal peptide (tat-type signal). His43, Tyr44, Tyr169, Tyr225, and Tyr226 together coordinate Fe cation.

This sequence belongs to the bacterial solute-binding protein 1 family. In terms of processing, predicted to be exported by the Tat system. The position of the signal peptide cleavage has not been experimentally proven.

The protein resides in the cellular thylakoid membrane. The protein localises to the periplasm. Its function is as follows. Probably part of a periplasmic ABC transporter complex futA1A2BC (TC 3.A.1.10.2) involved in Fe(3+) ion import (ferric iron). This protein and futA1 (slr1295) are subunit proteins that have redundant or overlapping substrate-binding functions. The differing subcellular locations of futA1 (predominantly thylakoid lumen) and futA2 (predominantly periplasmic) suggest they may fulfill different roles. In terms of biological role, plays an important role in protecting the acceptor side of photosystem II (PSII) against oxidative damage, especially under iron-limiting growth conditions. Plays an undefined role in copper supply to thylakoid proteins. The protein is Iron uptake protein A2 (futA2) of Synechocystis sp. (strain ATCC 27184 / PCC 6803 / Kazusa).